The following is a 234-amino-acid chain: Chalcone--flavanone isomerase 1 (234 aa).

Positions 50, 115, and 192 each coordinate substrate.

It belongs to the chalcone isomerase family.

The enzyme catalyses a chalcone = a flavanone.. It functions in the pathway secondary metabolite biosynthesis; flavonoid biosynthesis. Functionally, catalyzes the intramolecular cyclization of bicyclic chalcones into tricyclic (S)-flavanones. Responsible for the isomerization of 4,2',4',6'-tetrahydroxychalcone (also termed chalcone) into naringenin. This is Chalcone--flavanone isomerase 1 (CHI1) from Vitis vinifera (Grape).